Consider the following 335-residue polypeptide: Ketol-acid reductoisomerase (NADP(+)) (335 aa).

A KARI N-terminal Rossmann domain is found at 2–182 (VEMFYDKDAD…GCTRAGVIET (181 aa)). Residues 25-28 (YGSQ), R48, S51, and 83-86 (DEIQ) each bind NADP(+). H108 is an active-site residue. G134 lines the NADP(+) pocket. The KARI C-terminal knotted domain occupies 183–328 (TFREETETDL…KKLRAMMPWL (146 aa)). Mg(2+) contacts are provided by D191, E195, E227, and E231. Residue S252 participates in substrate binding.

It belongs to the ketol-acid reductoisomerase family. Requires Mg(2+) as cofactor.

It carries out the reaction (2R)-2,3-dihydroxy-3-methylbutanoate + NADP(+) = (2S)-2-acetolactate + NADPH + H(+). The catalysed reaction is (2R,3R)-2,3-dihydroxy-3-methylpentanoate + NADP(+) = (S)-2-ethyl-2-hydroxy-3-oxobutanoate + NADPH + H(+). Its pathway is amino-acid biosynthesis; L-isoleucine biosynthesis; L-isoleucine from 2-oxobutanoate: step 2/4. The protein operates within amino-acid biosynthesis; L-valine biosynthesis; L-valine from pyruvate: step 2/4. Involved in the biosynthesis of branched-chain amino acids (BCAA). Catalyzes an alkyl-migration followed by a ketol-acid reduction of (S)-2-acetolactate (S2AL) to yield (R)-2,3-dihydroxy-isovalerate. In the isomerase reaction, S2AL is rearranged via a Mg-dependent methyl migration to produce 3-hydroxy-3-methyl-2-ketobutyrate (HMKB). In the reductase reaction, this 2-ketoacid undergoes a metal-dependent reduction by NADPH to yield (R)-2,3-dihydroxy-isovalerate. This Methanococcoides burtonii (strain DSM 6242 / NBRC 107633 / OCM 468 / ACE-M) protein is Ketol-acid reductoisomerase (NADP(+)).